The sequence spans 133 residues: Small ribosomal subunit protein uS8 (133 aa).

It belongs to the universal ribosomal protein uS8 family. As to quaternary structure, part of the 30S ribosomal subunit. Contacts proteins S5 and S12.

In terms of biological role, one of the primary rRNA binding proteins, it binds directly to 16S rRNA central domain where it helps coordinate assembly of the platform of the 30S subunit. This Koribacter versatilis (strain Ellin345) protein is Small ribosomal subunit protein uS8.